The sequence spans 182 residues: Isopentenyl-diphosphate Delta-isomerase (182 aa).

Mn(2+) is bound by residues His-25 and His-32. The Nudix hydrolase domain maps to 30-164; that stretch reads LLHLAFSSWL…PWAFSPWMVM (135 aa). Cys-67 is an active-site residue. Residue His-69 participates in Mn(2+) binding. Glu-87 is a binding site for Mg(2+). Residues Glu-114 and Glu-116 each coordinate Mn(2+). The active site involves Glu-116.

It belongs to the IPP isomerase type 1 family. As to quaternary structure, homodimer. Mg(2+) is required as a cofactor. It depends on Mn(2+) as a cofactor.

The protein resides in the cytoplasm. The catalysed reaction is isopentenyl diphosphate = dimethylallyl diphosphate. The protein operates within isoprenoid biosynthesis; dimethylallyl diphosphate biosynthesis; dimethylallyl diphosphate from isopentenyl diphosphate: step 1/1. Functionally, catalyzes the 1,3-allylic rearrangement of the homoallylic substrate isopentenyl (IPP) to its highly electrophilic allylic isomer, dimethylallyl diphosphate (DMAPP). This Escherichia coli (strain ATCC 8739 / DSM 1576 / NBRC 3972 / NCIMB 8545 / WDCM 00012 / Crooks) protein is Isopentenyl-diphosphate Delta-isomerase.